The sequence spans 327 residues: GTPase Obg (327 aa).

An Obg domain is found at 1 to 159 (MQFIDQANII…WEVQLELKLL (159 aa)). The OBG-type G domain maps to 160 to 327 (AEVGIIGLPN…SLLSEVWNRI (168 aa)). Residues 166–173 (GLPNAGKS), 191–195 (FTTLI), 213–216 (DIPG), 280–283 (NKKE), and 309–311 (SSA) contribute to the ATP site. Residues Ser-173 and Thr-193 each coordinate Mg(2+).

This sequence belongs to the TRAFAC class OBG-HflX-like GTPase superfamily. OBG GTPase family. As to quaternary structure, monomer. It depends on Mg(2+) as a cofactor.

The protein localises to the cytoplasm. Functionally, an essential GTPase which binds GTP, GDP and possibly (p)ppGpp with moderate affinity, with high nucleotide exchange rates and a fairly low GTP hydrolysis rate. Plays a role in control of the cell cycle, stress response, ribosome biogenesis and in those bacteria that undergo differentiation, in morphogenesis control. The chain is GTPase Obg from Prochlorococcus marinus (strain MIT 9515).